Reading from the N-terminus, the 416-residue chain is uncharacterized protein (416 aa).

Helical transmembrane passes span 5-25 (LFLI…ILSL), 84-104 (ISGL…LKHV), 128-148 (AYVP…LFSI), 160-180 (LAFL…YLLW), 192-212 (VLLF…KFGF), 237-257 (PIYF…PVFL), 263-283 (FDKR…FYSL), 288-308 (LHHY…FYLT), and 312-332 (IKYA…GVYI).

This sequence belongs to the glycosyltransferase 83 family.

Its subcellular location is the cell membrane. This is an uncharacterized protein from Aquifex aeolicus (strain VF5).